We begin with the raw amino-acid sequence, 1407 residues long: MASCASIDIEDATQHLRDILKLDRPAGGSNVESQRPSSAYNGDLNGLLVPDPLSSGDGNSTSKPGIRTMPPINLQEKQVICLSGDDSSTCIGILAKEVEIVASSDSSISSKARGSNKVKIQPVAKYDWEQKYYYGNLIAVSNSFLAYAIRAANNGSAMVRVISVSTSERTLLKGFTGSVADLAFAHLNSPQLACLDEAGDLFVWRLALVKGKIQEEILVHIRQPEGTPLNHFRRIIWCPFIPEESEDCCEESSPTVALLHEDRAEVWDLDMLRSSHSTWPVDVSQIKQGFIVVKGHSTCLSEGALSPDGTVLATASHDGFVKFWQIYIEGQDEPRCLHEWKPHDGRPLSCLLFCDNHKKQDPEVPFWRFLITGADQNRELKMWCTVSWTCLQTIRFSPDIFSSVSVPPSLKVCLDLSAEYLILSDVQRKVLYVMELLQNQDEGRACFSSISEFLLTHPVLSFGIQVVSRCRLRHTEVLPAEEESDSLGTESSHGAGTLESAAGVLIKLFCVHTKALQDVQIRFQPQLNPDVVAPLSTHTAHEDFTFGESRPELGSEGLASAPHGSQPDLRRIVELPAPADFLSLSSETKPKLMTPDAFMTPTASLQQISASPSSSSSSSSSSSSSSSSSSSSSLTAVSAVSSSSAMDPSLPSRPPEELTLSPKLQLDGSLTISSSSSLQASPRSLLPGLLPGPADKLIPKGPGQVSSGTSALSLDLQEVEPLGLPQASPSRTRSPDVISSASTALSQDIPEIASEALSRGFGSSVPEGLIEPDSMASAASALHLLSPRPRQGPELSSQLGLDGGPGDGDRHSTPSLLEAALTQEVATSDSQVWPTAPDITRETCSTLTESPRNGLQEKHKSLAFHRPPYHLLQQHDSQDTSAEQSDHDDEVASLASASGGFGSKIPTPRLPAKDWKTKGSPRTSPKLKRKSKKDDGDSAVGSRLTEHQVVEPPEDWPALIWQQQRELAELWHNQEELLQRLCAQLEGLQSTVTDHVERALETRHEQEQRRLERALAEGQQRGGQLQEQLTQQLSQALSSAVAGRLERSIRDEIKKTVPPCVSRSLEPVAGQLSNSVATKLTAVEGSMKENISKLLKSKNLTDAIARAAADTLQGPMQAAYREAFQSVVLPAFEKSCQAMFQQINDSFRLGTQEYLQQLDSHMKSRKAREQEAREPVLAQLRGLVSTLQNATEQMAATVSSSVRAEVQHQLHVAVGSLQESILAQVQRIVKGEVSVALKEQQATVTSSIMQAMRSAAGTPVPSAHLDCQAQQAHILQLLQQGHLNQAFQQALTAADLNLVLYVCETVDPAQVFGQPPCPLSQPVLLSLIQQLASDLGTRSDLKLSYLEEAVMHLDHSDPITRDHMGSVMAQVRQKLFQFLQADPHNSLGKAARRLSLMLHGLVTPSLP.

The residue at position 2 (A2) is an N-acetylalanine. Phosphoserine is present on residues S3 and S6. K125 bears the N6-acetyllysine mark. 4 WD repeats span residues 174–214 (GFTG…GKIQ), 230–277 (NHFR…SSHS), 295–334 (GHST…QDEP), and 342–393 (PHDG…CLQT). Residues 547 to 566 (GESRPELGSEGLASAPHGSQ) form a disordered region. Phosphoserine occurs at positions 560, 565, 583, and 585. 2 disordered regions span residues 604 to 632 (SLQQ…SSSS) and 673 to 745 (SSSS…STAL). Composition is skewed to low complexity over residues 609-632 (SASP…SSSS) and 673-693 (SSSS…LPGP). A phosphoserine mark is found at S681, S713, S728, and S730. Over residues 727 to 745 (ASPSRTRSPDVISSASTAL) the composition is skewed to polar residues. T732 is subject to Phosphothreonine. Phosphoserine occurs at positions 734 and 746. Residues 787-817 (PRPRQGPELSSQLGLDGGPGDGDRHSTPSLL) form a disordered region. Position 827 is a phosphothreonine (T827). S850 and S877 each carry phosphoserine. Residues 875-951 (HDSQDTSAEQ…SRLTEHQVVE (77 aa)) form a disordered region. Residue T880 is modified to Phosphothreonine. S881, S885, S893, S896, and S898 each carry phosphoserine. T907 carries the post-translational modification Phosphothreonine. A coiled-coil region spans residues 972-1031 (HNQEELLQRLCAQLEGLQSTVTDHVERALETRHEQEQRRLERALAEGQQRGGQLQEQLTQ). At S1386 the chain carries Phosphoserine.

The protein belongs to the WD repeat EDC4 family. Part of a decapping complex consisting of DCP1A, DCP2, EDC3, EDC4 and probably DDX6. Part of a complex consisting of DCP1A, EDC3, EDC4 and DDX6. Part of a complex consisting of DCP1B, EDC3, EDC4 and DDX6. Interacts with DCP2. Interacts with NBDY. Interacts with Tex19.1. Interacts with LSM14A. Interacts with DDX6.

The protein resides in the cytoplasm. It is found in the P-body. It localises to the nucleus. Functionally, in the process of mRNA degradation, seems to play a role in mRNA decapping. Component of a complex containing DCP2 and DCP1A which functions in decapping of ARE-containing mRNAs. Promotes complex formation between DCP1A and DCP2. Enhances the catalytic activity of DCP2 (in vitro). The protein is Enhancer of mRNA-decapping protein 4 (Edc4) of Rattus norvegicus (Rat).